Reading from the N-terminus, the 230-residue chain is MFRGKKYQEAAKLVDKTKLYDPEEAIELALKTSYAKFDETVEVHVRLNVDPRHADQQVRGTVVLPNGTGKSVRVLVFAKGDKAKEAEEAGADYVGAEELVAKIQNEGWTDFDVCIATPDMMGLVGRLGKILGPKGLMPNPKSGTVTMDVAKAVKEAKAGRVEFRLDKTAIIHCPIGKVSFGKEKLLENYRTLIEAIIKARPAAAKGQFIKSITVATTMGPGIKINPLKPL.

The protein belongs to the universal ribosomal protein uL1 family. In terms of assembly, part of the 50S ribosomal subunit.

In terms of biological role, binds directly to 23S rRNA. The L1 stalk is quite mobile in the ribosome, and is involved in E site tRNA release. Functionally, protein L1 is also a translational repressor protein, it controls the translation of the L11 operon by binding to its mRNA. The polypeptide is Large ribosomal subunit protein uL1 (Caldicellulosiruptor bescii (strain ATCC BAA-1888 / DSM 6725 / KCTC 15123 / Z-1320) (Anaerocellum thermophilum)).